The primary structure comprises 1757 residues: 1-phosphatidylinositol-3-phosphate 5-kinase FAB1A (1757 aa).

The FYVE-type zinc finger occupies 36–102 (DQSCPVCYEC…VCNYCYKQWE (67 aa)). Zn(2+)-binding residues include cysteine 42, cysteine 45, cysteine 58, cysteine 61, cysteine 66, cysteine 69, cysteine 94, and cysteine 97. Disordered stretches follow at residues 125 to 193 (ARSV…SDNQ), 276 to 297 (KTRQQENGWNDVKEGSPPCEES), 313 to 346 (LPPEPENEEDEREAVLSDDDGDEGDRGDWGYLRP), and 684 to 709 (AEKSPTTELRGEPHKANGDLTGNFTS). A compositionally biased stretch (polar residues) spans 134–145 (NSSNCTIDSTAG). A compositionally biased stretch (acidic residues) spans 317 to 337 (PENEEDEREAVLSDDDGDEGD). Positions 1014 to 1087 (LQKESKEVIK…LQQMLNVVKD (74 aa)) form a coiled coil. Residues 1395–1719 (SFSLFDSVNL…RFRKAMTAYF (325 aa)) enclose the PIPK domain. A compositionally biased stretch (low complexity) spans 1729 to 1739 (AAVVPSNSSSA). The tract at residues 1729-1757 (AAVVPSNSSSAEVKEEEEKDNPQAVGNKS) is disordered.

Component of the PI(3,5)P2 regulatory complex at least composed of ATG18, SAC/FIG4, FAB1 and VAC14. Mg(2+) is required as a cofactor. The cofactor is Mn(2+). As to expression, ubiquitous with highest expression levels in pollen, seed, and senescent leaves.

It is found in the endosome membrane. The enzyme catalyses a 1,2-diacyl-sn-glycero-3-phospho-(1D-myo-inositol-3-phosphate) + ATP = a 1,2-diacyl-sn-glycero-3-phospho-(1D-myo-inositol-3,5-bisphosphate) + ADP + H(+). The PI(3,5)P2 regulatory complex regulates both the synthesis and turnover of phosphatidylinositol 3,5-bisphosphate (PtdIns(3,5)P2). Catalyzes the phosphorylation of phosphatidylinositol 3-phosphate on the fifth hydroxyl of the myo-inositol ring, to form phosphatidylinositol 3,5-bisphosphate. Plays an important role in maintenance of endomembrane homeostasis including endocytosis, vacuole formation, and vacuolar acidification processes. Required for development of viable pollen. Might mediate recycling of auxin transporters. This Arabidopsis thaliana (Mouse-ear cress) protein is 1-phosphatidylinositol-3-phosphate 5-kinase FAB1A (FAB1A).